The chain runs to 152 residues: Large ribosomal subunit protein bL9 (152 aa).

Belongs to the bacterial ribosomal protein bL9 family.

Binds to the 23S rRNA. This is Large ribosomal subunit protein bL9 from Trichormus variabilis (strain ATCC 29413 / PCC 7937) (Anabaena variabilis).